Here is a 599-residue protein sequence, read N- to C-terminus: Potassium-transporting ATPase potassium-binding subunit (599 aa).

The next 12 helical transmembrane spans lie at 8–28 (LLAL…IWLA), 61–81 (WQYA…VYAL), 133–153 (ALAV…FALF), 176–196 (AWLL…NGVI), 280–300 (LTNF…CFAF), 311–331 (WAVL…ITPA), 366–386 (INAS…AVIA), 391–411 (FTPL…VVFG), 416–436 (GLYG…LMIG), 456–476 (IAIL…VLAG), 521–541 (LLGL…LAIA), and 563–583 (LFVL…YVPA).

This sequence belongs to the KdpA family. In terms of assembly, the system is composed of three essential subunits: KdpA, KdpB and KdpC.

Its subcellular location is the cell inner membrane. Part of the high-affinity ATP-driven potassium transport (or Kdp) system, which catalyzes the hydrolysis of ATP coupled with the electrogenic transport of potassium into the cytoplasm. This subunit binds the periplasmic potassium ions and delivers the ions to the membrane domain of KdpB through an intramembrane tunnel. This chain is Potassium-transporting ATPase potassium-binding subunit, found in Polaromonas naphthalenivorans (strain CJ2).